We begin with the raw amino-acid sequence, 1369 residues long: MutS protein homolog 5 (1369 aa).

The tract at residues 138 to 190 (IYEDGTTEEGTSEDTVPTWDSSLAYSTDETTAEKEEKEEDEDDDDEGLPAKLN) is disordered. The span at 173–184 (EKEEDEDDDDEG) shows a compositional bias: acidic residues. 639–646 (GPNACGKS) is an ATP binding site. 4 disordered regions span residues 880–915 (SMRN…SVLS), 935–1135 (KKKK…RSSN), 1153–1182 (LKSQ…HSQN), and 1248–1278 (NFIF…SSIS). The span at 884–894 (VSEEIEKERSE) shows a compositional bias: basic and acidic residues. Polar residues-rich tracts occupy residues 895–915 (ASTP…SVLS) and 941–950 (TGSSMESSMS). Over residues 954–967 (FQEEDEGTEGEEDQ) the composition is skewed to acidic residues. Positions 991–1003 (QSINSRHSFSTRT) are enriched in polar residues. Positions 1024–1037 (STSTSSPGPSASKS) are enriched in low complexity. Residues 1049-1065 (VKESQVLETPKQLSISS) are compositionally biased toward polar residues. A compositionally biased stretch (basic and acidic residues) spans 1073 to 1084 (SSEKDVISRVSE). Polar residues-rich tracts occupy residues 1111-1124 (KNRS…QSAR) and 1153-1167 (LKSQ…TPRS). A compositionally biased stretch (basic and acidic residues) spans 1254–1263 (PEPRSSEKQR).

This sequence belongs to the DNA mismatch repair MutS family. In terms of assembly, heterooligomer of him-14 and msh-5. Interacts with the brc-1-brd-1 heterodimer. Expressed in the germline.

Its subcellular location is the chromosome. In terms of biological role, crucial component in meiotic recombination, functioning at some point after the initiation step of recombination. Plays a role in promoting the crossover outcome of meiotic recombination events. Required for formation of normal meiotic crossover, and crossover and chiasmata generated by artificially made DNA breaks. Together with him-14 and zhp-3 plays a role in the activation of DNA damage-dependent apoptosis at the DNA damage checkpoint in pachytene cells. This Caenorhabditis elegans protein is MutS protein homolog 5.